The chain runs to 534 residues: MTKQILYQENARKALEKGIDILAEAVSVTLGPKGRNVVIEKKYGPPQIINDGVTIAKEIELEDHIENTGVALIRQAASKTNDVAGDGTTTSTVLAHAIVKQGMRNVAAGANPIALKRGIDKATQFIINKISEYSRPVEDNKAITQVATISSGNDENIGKMIADAIEKVGREGVISIEEGKSTTTELEIKEGMKFERGYISPYFVTDSDRMEVVQENASVLITDKKITLVQQDLLPVLEQIAKTNKPLLIIAEDIEKEALATLIVNKLRGILNVVAVKAPGFGDRRKSILEDIAILTGGQLITEDAGLSLDKVDLSMLGQANKVIVNKESTTIISNANENNVKARCEQIRKQIEITDSSYEKEKLQERLAKLAGGIAVIKVGAATETEMKDKKLRLEDAINATKAAIEEGIVPGGGATLVHLANDLFNWAKGVLKEDELIGALIVEKSITAPLKRIVQNEGKNGAIVVDEIKNLDFSIGYDASTSKFVNMYESGIIDPAKVTRSALQNASSIAGMILTTECLVVDEMNRNMEVRK.

Residues 29–32 (TLGP), 86–90 (DGTTT), Gly-414, and Asp-496 each bind ATP.

The protein belongs to the chaperonin (HSP60) family. As to quaternary structure, forms a cylinder of 14 subunits composed of two heptameric rings stacked back-to-back. Interacts with the co-chaperonin GroES.

It is found in the plastid. The protein localises to the chloroplast. It carries out the reaction ATP + H2O + a folded polypeptide = ADP + phosphate + an unfolded polypeptide.. Its function is as follows. Together with its co-chaperonin GroES, plays an essential role in assisting protein folding. The GroEL-GroES system forms a nano-cage that allows encapsulation of the non-native substrate proteins and provides a physical environment optimized to promote and accelerate protein folding. The chain is Chaperonin GroEL, chloroplastic from Galdieria sulphuraria (Red alga).